A 183-amino-acid chain; its full sequence is Endoribonuclease AbiQ (183 aa).

The protein belongs to the ToxN/AbiQ toxin family. As to quaternary structure, forms a triangular heterohexamer with a single 35-nt-long repeat of RNA antitoxin AntiQ.

It is found in the cytoplasm. Its function is as follows. Toxic component of a type III toxin-antitoxin (TA) system. An endoribonuclease that is probably sequence-specific. It is neutralized by its cognate antitoxin RNA AntiQ, which has 2.8 35 nucleotide-long repeats. Cannot be cloned in L.lactis subsp. cremoris strain NZ9000 in the absence of the antitoxin gene; expression in strain NZ9000 even in the presence of antiQ inhibits growth in a bacteriostatic fashion. Confers resistance to 936 and c2 phages but not P335 phages in L.lactis, causes an abortive infection (Abi phenotype). Viral DNA is replicated but not cleaved from its concatemeric form, while the viral major structural protein is produced normally in the presence of this protein. Operon expression in E.coli confers resistance to 3 phages of the Myoviridae family (T4, RB69 and phage 2) and 1 of the Siphoviridae family (T5), but not other tested phages (T1, T3, lambda vir, HK97, Mu and pilH alpha). The presence of this operon in L.lactis subsp. lactis strain IL1403 during phage P008 infection alters the viral transcription profiles. This is Endoribonuclease AbiQ from Lactococcus lactis subsp. lactis (Streptococcus lactis).